The sequence spans 503 residues: Cytochrome P450 11B2, mitochondrial (503 aa).

The N-terminal 24 residues, 1 to 24 (MALRAKAEVCVAAPWLSLQRARAL), are a transit peptide targeting the mitochondrion. Phe-381 is a binding site for 21-hydroxyprogesterone. Cys-450 provides a ligand contact to heme.

This sequence belongs to the cytochrome P450 family. Requires heme as cofactor. As to expression, expressed sporadically in the zona glomerulosa (zG) of the adrenal cortex (conventional zonation), as well as in aldosterone-producing cell clusters (APCCs) composed of morphological zG cells in contact with the capsule (variegated zonation).

It is found in the mitochondrion inner membrane. It carries out the reaction a steroid + 2 reduced [adrenodoxin] + O2 + 2 H(+) = an 11beta-hydroxysteroid + 2 oxidized [adrenodoxin] + H2O. It catalyses the reaction 21-hydroxyprogesterone + 2 reduced [adrenodoxin] + O2 + 2 H(+) = corticosterone + 2 oxidized [adrenodoxin] + H2O. The catalysed reaction is corticosterone + 2 reduced [adrenodoxin] + O2 + 2 H(+) = 18-hydroxycorticosterone + 2 oxidized [adrenodoxin] + H2O. The enzyme catalyses 18-hydroxycorticosterone + 2 reduced [adrenodoxin] + O2 + 2 H(+) = aldosterone + 2 oxidized [adrenodoxin] + 2 H2O. It carries out the reaction 11-deoxycortisol + 2 reduced [adrenodoxin] + O2 + 2 H(+) = cortisol + 2 oxidized [adrenodoxin] + H2O. It catalyses the reaction 21-hydroxyprogesterone + 2 reduced [adrenodoxin] + O2 + 2 H(+) = 18-hydroxy-11-deoxycorticosterone + 2 oxidized [adrenodoxin] + H2O. The catalysed reaction is cortisol + 2 reduced [adrenodoxin] + O2 + 2 H(+) = 18-hydroxycortisol + 2 oxidized [adrenodoxin] + H2O. The enzyme catalyses 18-hydroxycortisol + 2 reduced [adrenodoxin] + O2 + 2 H(+) = 18-oxocortisol + 2 oxidized [adrenodoxin] + 2 H2O. Its pathway is steroid biosynthesis. Its function is as follows. A cytochrome P450 monooxygenase that catalyzes the biosynthesis of aldosterone, the main mineralocorticoid in the human body responsible for salt and water homeostasis, thus involved in blood pressure regulation, arterial hypertension, and the development of heart failure. Catalyzes three sequential oxidative reactions of 11-deoxycorticosterone (21-hydroxyprogesterone), namely 11-beta hydroxylation, followed by two successive oxidations at C18 yielding 18-hydroxy and then 18-oxo intermediates (that would not leave the enzyme active site during the consecutive hydroxylation reactions), ending with the formation of aldosterone. Can also produce 18-hydroxycortisol and 18-oxocortisol, derived from successive oxidations of cortisol at C18, normally found at very low levels, but significantly increased in primary aldosteronism, the most common form of secondary hypertension. Mechanistically, uses molecular oxygen inserting one oxygen atom into a substrate and reducing the second into a water molecule. Two electrons are provided by NADPH via a two-protein mitochondrial transfer system comprising flavoprotein FDXR (adrenodoxin/ferredoxin reductase) and nonheme iron-sulfur protein FDX1 or FDX2 (adrenodoxin/ferredoxin). Could also be involved in the androgen metabolic pathway. The protein is Cytochrome P450 11B2, mitochondrial of Homo sapiens (Human).